Here is a 256-residue protein sequence, read N- to C-terminus: Thrombin-like enzyme cerastocytin (256 aa).

The signal sequence occupies residues 1 to 18 (MVLISVLASLLVLQLSYA). Residues 19-24 (QKSSEL) constitute a propeptide that is removed on maturation. A Peptidase S1 domain is found at 25–247 (VIGGAECNIN…YTDWIRNIIA (223 aa)). 5 disulfides stabilise this stretch: Cys31–Cys161, Cys98–Cys254, Cys140–Cys208, Cys172–Cys187, and Cys198–Cys223. Asn44 carries an N-linked (GlcNAc...) asparagine glycan. Catalysis depends on charge relay system residues His65 and Asp108. N-linked (GlcNAc...) asparagine glycosylation is found at Asn119, Asn120, and Asn152. Ser202 serves as the catalytic Charge relay system.

It belongs to the peptidase S1 family. Snake venom subfamily. In terms of assembly, monomer. As to expression, expressed by the venom gland.

The protein localises to the secreted. With respect to regulation, its platelets aggregating activity is inhibited by chlorpromazine, theophylline mepacrine. Its platelet aggregating activity and its amidolytic activity are inhibited by PMSF, TPCK, TLCK and soybean trypsin inhibitors. Is unaffected by hirudin or by antithrombin-III in the presence of heparin. In terms of biological role, thrombin-like snake venom serine protease which potently induces platelet aggregation and has fibrinogenolytic activities. Clots purified fibrinogen and hydrolyzes alpha-chains (FGA). High concentrations of this enzyme also cleave prothrombin (F2) and factor X (F10). Is also able to activate factor XIII (F8). The protein is Thrombin-like enzyme cerastocytin of Cerastes cerastes (Horned desert viper).